The chain runs to 591 residues: Serine/threonine-protein kinase PAK 4 (591 aa).

One can recognise a CRIB domain in the interval 11-24 (ISAPSNFEHRVHTG). The interval 25-320 (FDQHEQKFTG…VVDPGDPRSY (296 aa)) is linker. Serine 41 carries the post-translational modification Phosphoserine. Lysine 78 carries the post-translational modification N6-methyllysine. Positions 95–301 (TRSNSLRRDS…PQREPQRVSH (207 aa)) are disordered. Residues serine 104 and serine 148 each carry the phosphoserine modification. The span at 149 to 164 (GDRRRAGPEKRPKSSR) shows a compositional bias: basic and acidic residues. Phosphoserine occurs at positions 167 and 181. Threonine 187 is subject to Phosphothreonine. Over residues 191–202 (AGLASGAKLAAG) the composition is skewed to low complexity. Serine 195 carries the post-translational modification Phosphoserine. Threonine 207 is modified (phosphothreonine). A compositionally biased stretch (low complexity) spans 242-260 (SSSSSSRPPTRARGAPSPG). Serine 258 and serine 267 each carry phosphoserine. The segment covering 271–290 (LAPPACTPAAPAVPGPPGPR) has biased composition (pro residues). Position 291 is a phosphoserine (serine 291). The segment covering 292–301 (PQREPQRVSH) has biased composition (basic and acidic residues). The tract at residues 298–323 (RVSHEQFRAALQLVVDPGDPRSYLDN) is GEF-interaction domain (GID). One can recognise a Protein kinase domain in the interval 321–572 (LDNFIKIGEG…AAELLKHPFL (252 aa)). ATP contacts are provided by residues 327 to 335 (IGEGSTGIV), lysine 350, and 396 to 398 (EFL). The Proton acceptor role is filled by aspartate 440. An ATP-binding site is contributed by 458-460 (DFG). Serine 474 is modified (phosphoserine; by autocatalysis).

The protein belongs to the protein kinase superfamily. STE Ser/Thr protein kinase family. STE20 subfamily. In terms of assembly, interacts with FGFR2 and GRB2. Interacts tightly with GTP-bound but not GDP-bound CDC42/p21 and weakly with RAC1. Interacts with INKA1. Interacts with SH3RF2. Interacts with RHOU and PAXI; the PAK4-RHOU complex protects RHOU from ubiquitination and acts as a scaffold to suppport paxillin/PAXI phosphorylation. In terms of processing, autophosphorylated on serine residues when activated by CDC42/p21. Phosphorylated on tyrosine residues upon stimulation of FGFR2. Methylated by SETD6. Polyubiquitinated, leading to its proteasomal degradation. As to expression, highest expression in prostate, testis and colon.

Its subcellular location is the cytoplasm. It carries out the reaction L-seryl-[protein] + ATP = O-phospho-L-seryl-[protein] + ADP + H(+). It catalyses the reaction L-threonyl-[protein] + ATP = O-phospho-L-threonyl-[protein] + ADP + H(+). Its activity is regulated as follows. Inhibited by INKA1; which inhibits the serine/threonine-protein kinase activity by binding PAK4 in a substrate-like manner. Its function is as follows. Serine/threonine-protein kinase that plays a role in a variety of different signaling pathways including cytoskeleton regulation, cell adhesion turnover, cell migration, growth, proliferation or cell survival. Activation by various effectors including growth factor receptors or active CDC42 and RAC1 results in a conformational change and a subsequent autophosphorylation on several serine and/or threonine residues. Phosphorylates and inactivates the protein phosphatase SSH1, leading to increased inhibitory phosphorylation of the actin binding/depolymerizing factor cofilin. Decreased cofilin activity may lead to stabilization of actin filaments. Phosphorylates LIMK1, a kinase that also inhibits the activity of cofilin. Phosphorylates integrin beta5/ITGB5 and thus regulates cell motility. Phosphorylates ARHGEF2 and activates the downstream target RHOA that plays a role in the regulation of assembly of focal adhesions and actin stress fibers. Stimulates cell survival by phosphorylating the BCL2 antagonist of cell death BAD. Alternatively, inhibits apoptosis by preventing caspase-8 binding to death domain receptors in a kinase independent manner. Plays a role in cell-cycle progression by controlling levels of the cell-cycle regulatory protein CDKN1A and by phosphorylating RAN. Promotes kinase-independent stabilization of RHOU, thereby contributing to focal adhesion disassembly during cell migration. The sequence is that of Serine/threonine-protein kinase PAK 4 from Homo sapiens (Human).